The following is a 264-amino-acid chain: Apolipoprotein A-I (264 aa).

Positions 1–18 are cleaved as a signal peptide; the sequence is MKAVVLAVAVLFLTGSQA. Repeat copies occupy residues 67–88 and 89–110. The interval 67–264 is 10 X approximate tandem repeats; the sequence is LKLVDNWDTV…DETSKRLSTQ (198 aa). Met109 is subject to Methionine sulfoxide. One copy of the 3; half-length repeat lies at 111-121; that stretch reads KDLEEVKKQVQ. Tandem repeats lie at residues 122 to 143, 144 to 165, and 166 to 187. One copy of the 7; truncated repeat lies at 188-207; the sequence is PYSDKMRERLAQHLAKLKDS. Met193 carries the post-translational modification Methionine sulfoxide. Residues 208–229 form repeat 8; that stretch reads TTLAEYRTKASNHLQTLSEKAK. The 9; half-length repeat unit spans residues 230-240; the sequence is PALEDLRQGLT. Copy 10 of the repeat occupies 241 to 264; the sequence is PMLESFRATIMGWIDETSKRLSTQ. Position 242 is a methionine sulfoxide (Met242).

It belongs to the apolipoprotein A1/A4/E family. In terms of assembly, homodimer. Interacts with APOA1BP and CLU. Component of a sperm activating protein complex (SPAP), consisting of APOA1, an immunoglobulin heavy chain, an immunoglobulin light chain and albumin. Interacts with NDRG1. Interacts with SCGB3A2. Interacts with NAXE and YJEFN3. Glycosylated. In terms of processing, palmitoylated. Post-translationally, phosphorylation sites are present in the extracellular medium.

Its subcellular location is the secreted. Functionally, participates in the reverse transport of cholesterol from tissues to the liver for excretion by promoting cholesterol efflux from tissues and by acting as a cofactor for the lecithin cholesterol acyltransferase (LCAT). As part of the SPAP complex, activates spermatozoa motility. This is Apolipoprotein A-I (Apoa1) from Peromyscus maniculatus bairdii (Prairie deer mouse).